Consider the following 375-residue polypeptide: 23S rRNA (uracil(747)-C(5))-methyltransferase RlmC (375 aa).

[4Fe-4S] cluster contacts are provided by cysteine 3, cysteine 11, cysteine 14, and cysteine 87. S-adenosyl-L-methionine is bound by residues glutamine 212, phenylalanine 241, glutamate 262, and asparagine 307. The active-site Nucleophile is cysteine 334.

It belongs to the class I-like SAM-binding methyltransferase superfamily. RNA M5U methyltransferase family. RlmC subfamily.

It carries out the reaction uridine(747) in 23S rRNA + S-adenosyl-L-methionine = 5-methyluridine(747) in 23S rRNA + S-adenosyl-L-homocysteine + H(+). Functionally, catalyzes the formation of 5-methyl-uridine at position 747 (m5U747) in 23S rRNA. In Shigella flexneri serotype 5b (strain 8401), this protein is 23S rRNA (uracil(747)-C(5))-methyltransferase RlmC.